We begin with the raw amino-acid sequence, 476 residues long: Exodeoxyribonuclease 7 large subunit (476 aa).

This sequence belongs to the XseA family. Heterooligomer composed of large and small subunits.

The protein resides in the cytoplasm. The enzyme catalyses Exonucleolytic cleavage in either 5'- to 3'- or 3'- to 5'-direction to yield nucleoside 5'-phosphates.. Functionally, bidirectionally degrades single-stranded DNA into large acid-insoluble oligonucleotides, which are then degraded further into small acid-soluble oligonucleotides. The protein is Exodeoxyribonuclease 7 large subunit of Bartonella bacilliformis (strain ATCC 35685 / KC583 / Herrer 020/F12,63).